The chain runs to 298 residues: Lipoyl synthase (298 aa).

C40, C45, C51, C67, C71, C74, and S280 together coordinate [4Fe-4S] cluster. The Radical SAM core domain occupies 53-269; sequence AVRKTATFMI…KEIALSKGFS (217 aa).

The protein belongs to the radical SAM superfamily. Lipoyl synthase family. [4Fe-4S] cluster is required as a cofactor.

The protein resides in the cytoplasm. It catalyses the reaction [[Fe-S] cluster scaffold protein carrying a second [4Fe-4S](2+) cluster] + N(6)-octanoyl-L-lysyl-[protein] + 2 oxidized [2Fe-2S]-[ferredoxin] + 2 S-adenosyl-L-methionine + 4 H(+) = [[Fe-S] cluster scaffold protein] + N(6)-[(R)-dihydrolipoyl]-L-lysyl-[protein] + 4 Fe(3+) + 2 hydrogen sulfide + 2 5'-deoxyadenosine + 2 L-methionine + 2 reduced [2Fe-2S]-[ferredoxin]. It participates in protein modification; protein lipoylation via endogenous pathway; protein N(6)-(lipoyl)lysine from octanoyl-[acyl-carrier-protein]. Functionally, catalyzes the radical-mediated insertion of two sulfur atoms into the C-6 and C-8 positions of the octanoyl moiety bound to the lipoyl domains of lipoate-dependent enzymes, thereby converting the octanoylated domains into lipoylated derivatives. This Bacillus cereus (strain G9842) protein is Lipoyl synthase.